Here is a 460-residue protein sequence, read N- to C-terminus: GTPase Der (460 aa).

EngA-type G domains lie at 2–164 and 196–368; these read QSII…HEEF and IRVG…ENFT. GTP-binding positions include 8–15, 55–59, 116–119, 202–209, 249–253, and 313–316; these read GKPNVGKS, DSGGL, NKVD, GRVNVGKS, DTAGI, and NKWD. Residues 369 to 453 form the KH-like domain; it reads QKIQTSKLNT…PLVIASRKKG (85 aa).

The protein belongs to the TRAFAC class TrmE-Era-EngA-EngB-Septin-like GTPase superfamily. EngA (Der) GTPase family. In terms of assembly, associates with the 50S ribosomal subunit.

Functionally, GTPase that plays an essential role in the late steps of ribosome biogenesis. This is GTPase Der from Campylobacter jejuni subsp. jejuni serotype O:6 (strain 81116 / NCTC 11828).